Here is a 306-residue protein sequence, read N- to C-terminus: UDP-3-O-acyl-N-acetylglucosamine deacetylase (306 aa).

Residues His79, His238, and Asp242 each coordinate Zn(2+). The active-site Proton donor is His265.

It belongs to the LpxC family. Zn(2+) is required as a cofactor.

It catalyses the reaction a UDP-3-O-[(3R)-3-hydroxyacyl]-N-acetyl-alpha-D-glucosamine + H2O = a UDP-3-O-[(3R)-3-hydroxyacyl]-alpha-D-glucosamine + acetate. Its pathway is glycolipid biosynthesis; lipid IV(A) biosynthesis; lipid IV(A) from (3R)-3-hydroxytetradecanoyl-[acyl-carrier-protein] and UDP-N-acetyl-alpha-D-glucosamine: step 2/6. Functionally, catalyzes the hydrolysis of UDP-3-O-myristoyl-N-acetylglucosamine to form UDP-3-O-myristoylglucosamine and acetate, the committed step in lipid A biosynthesis. This is UDP-3-O-acyl-N-acetylglucosamine deacetylase from Shewanella sp. (strain W3-18-1).